Here is a 752-residue protein sequence, read N- to C-terminus: RNA-directed RNA polymerase (752 aa).

Residues 442–561 form the RdRp catalytic domain; that stretch reads PVAIGLDASR…FLEQSDLATF (120 aa).

This sequence belongs to the tombusviridae RNA polymerase family.

The catalysed reaction is RNA(n) + a ribonucleoside 5'-triphosphate = RNA(n+1) + diphosphate. Functionally, RNA-dependent RNA polymerase that plays an essential role in the virus replication. The chain is RNA-directed RNA polymerase from Oat chlorotic stunt virus (isolate United Kingdom) (OCSV).